Here is a 643-residue protein sequence, read N- to C-terminus: Alpha-dioxygenase PIOX (643 aa).

His-168 functions as the Proton acceptor in the catalytic mechanism. Residue Asp-169 coordinates Ca(2+). His-173 serves as a coordination point for heme b. Residues Thr-221, Trp-223, Asp-225, and Ser-227 each coordinate Ca(2+). Heme b contacts are provided by His-393, Arg-490, and Arg-494.

This sequence belongs to the peroxidase family. It depends on heme b as a cofactor. Ca(2+) is required as a cofactor.

It catalyses the reaction hexadecanoate + O2 = (2R)-2-hydroperoxyhexadecanoate. It carries out the reaction dodecanoate + O2 = (2R)-2-hydroperoxydodecanoate. Its function is as follows. Alpha-dioxygenase that catalyzes the primary oxygenation step of a variety of 14-20 carbon fatty acids, containing up to three unsaturated bonds, into their corresponding 2R-hydroperoxides. Involved in the production of oxylipins that function in cell signaling, wound healing, and protection from infection. The alpha-oxidation pathway of fatty acids may play a role during plant developmental processes. The sequence is that of Alpha-dioxygenase PIOX from Pisum sativum (Garden pea).